The primary structure comprises 276 residues: Orotidine 5'-phosphate decarboxylase (276 aa).

Lysine 95 serves as the catalytic Proton donor.

Belongs to the OMP decarboxylase family. Type 2 subfamily.

It carries out the reaction orotidine 5'-phosphate + H(+) = UMP + CO2. The protein operates within pyrimidine metabolism; UMP biosynthesis via de novo pathway; UMP from orotate: step 2/2. In Mycolicibacterium smegmatis (strain ATCC 700084 / mc(2)155) (Mycobacterium smegmatis), this protein is Orotidine 5'-phosphate decarboxylase (pyrF).